A 94-amino-acid polypeptide reads, in one-letter code: Alpha-conotoxin-like Cp20.2 (94 aa).

The first 24 residues, 1-24, serve as a signal peptide directing secretion; sequence MPKLAVVLLVLLILPLSYFDAAGG. Positions 25–45 are excised as a propeptide; sequence QAVQWDRRGNGLARYLQRGDR. Disulfide bonds link cysteine 63–cysteine 72, cysteine 68–cysteine 80, cysteine 73–cysteine 90, and cysteine 78–cysteine 92.

Belongs to the conotoxin D superfamily. As to quaternary structure, hetero-, homo- or pseudo-homodimer (identical sequence, different post-translational modifications). In terms of tissue distribution, expressed by the venom duct.

The protein resides in the secreted. In terms of biological role, alpha-conotoxins act on postsynaptic membranes, they bind to the nicotinic acetylcholine receptors (nAChR) and thus inhibit them. Through its two C-terminal domains, this homodimeric protein would bind to two nAChR allosteric sites, located outside the nAChR C-loop of the principal binding face and at the adjacent binding interface in a clockwise direction. This toxin specifically blocks mammalian neuronal nAChR of the alpha-7/CHRNA7, alpha-3-beta-2/CHRNA3-CHRNB2 and alpha-4-beta-2/CHRNA4-CHRNB2 subtypes. The polypeptide is Alpha-conotoxin-like Cp20.2 (Conus capitaneus (Captain cone)).